We begin with the raw amino-acid sequence, 141 residues long: Hemoglobin subunit alpha (141 aa).

In terms of domain architecture, Globin spans 1-141; that stretch reads VLSADDKANV…VSTVLTSKYR (141 aa). Position 3 is a phosphoserine (serine 3). N6-succinyllysine occurs at positions 7 and 11. At lysine 16 the chain carries N6-acetyllysine; alternate. The residue at position 16 (lysine 16) is an N6-succinyllysine; alternate. A Phosphotyrosine modification is found at tyrosine 24. Serine 35 bears the Phosphoserine mark. At lysine 40 the chain carries N6-succinyllysine. The residue at position 49 (serine 49) is a Phosphoserine. Histidine 58 serves as a coordination point for O2. Histidine 87 contributes to the heme b binding site. Serine 102 is modified (phosphoserine). The residue at position 108 (threonine 108) is a Phosphothreonine. Phosphoserine occurs at positions 124 and 131. 2 positions are modified to phosphothreonine: threonine 134 and threonine 137. Serine 138 bears the Phosphoserine mark.

This sequence belongs to the globin family. In terms of assembly, heterotetramer of two alpha chains and two beta chains. As to expression, red blood cells.

Its function is as follows. Involved in oxygen transport from the lung to the various peripheral tissues. This Peromyscus californicus (California mouse) protein is Hemoglobin subunit alpha.